The following is a 477-amino-acid chain: Endo-1,4-beta-xylanase A (477 aa).

The N-terminal stretch at 1 to 41 (MGSYALPRSGVRRSIRVLLLALVVGVLGTATALIAPPGAHA) is a signal peptide. In terms of domain architecture, GH10 spans 42–340 (AESTLGAAAA…KAAYTAVLDA (299 aa)). The active-site Proton donor is the glutamate 169. The Nucleophile role is filled by glutamate 277. A Ricin B-type lectin domain is found at 361–477 (SGRCLDVPDA…NGSNQRWTRT (117 aa)). 3 cysteine pairs are disulfide-bonded: cysteine 364-cysteine 383, cysteine 406-cysteine 423, and cysteine 447-cysteine 466.

The protein belongs to the glycosyl hydrolase 10 (cellulase F) family.

The protein resides in the secreted. The enzyme catalyses Endohydrolysis of (1-&gt;4)-beta-D-xylosidic linkages in xylans.. The protein operates within glycan degradation; xylan degradation. Its function is as follows. Contributes to hydrolyze hemicellulose, the major component of plant cell-walls. XLNA and XLNB seem to act sequentially on the substrate to yield xylobiose and xylose as carbon sources. This chain is Endo-1,4-beta-xylanase A (xlnA), found in Streptomyces lividans.